A 188-amino-acid polypeptide reads, in one-letter code: Ribosome-recycling factor (188 aa).

It belongs to the RRF family.

It localises to the cytoplasm. In terms of biological role, responsible for the release of ribosomes from messenger RNA at the termination of protein biosynthesis. May increase the efficiency of translation by recycling ribosomes from one round of translation to another. In Granulibacter bethesdensis (strain ATCC BAA-1260 / CGDNIH1), this protein is Ribosome-recycling factor.